Consider the following 197-residue polypeptide: 7-methyl-GTP pyrophosphatase (197 aa).

The Proton acceptor role is filled by Asp79.

The protein belongs to the Maf family. YceF subfamily.

The protein resides in the cytoplasm. It catalyses the reaction N(7)-methyl-GTP + H2O = N(7)-methyl-GMP + diphosphate + H(+). In terms of biological role, nucleoside triphosphate pyrophosphatase that hydrolyzes 7-methyl-GTP (m(7)GTP). May have a dual role in cell division arrest and in preventing the incorporation of modified nucleotides into cellular nucleic acids. The chain is 7-methyl-GTP pyrophosphatase from Dictyostelium discoideum (Social amoeba).